We begin with the raw amino-acid sequence, 149 residues long: Large ribosomal subunit protein bL9 (149 aa).

Belongs to the bacterial ribosomal protein bL9 family.

Binds to the 23S rRNA. The protein is Large ribosomal subunit protein bL9 of Helicobacter pylori (strain HPAG1).